A 757-amino-acid chain; its full sequence is Xaa-Pro dipeptidyl-peptidase (757 aa).

Residues S348, D468, and H498 each act as charge relay system in the active site.

This sequence belongs to the peptidase S15 family. As to quaternary structure, homodimer.

The protein resides in the cytoplasm. It carries out the reaction Hydrolyzes Xaa-Pro-|- bonds to release unblocked, N-terminal dipeptides from substrates including Ala-Pro-|-p-nitroanilide and (sequentially) Tyr-Pro-|-Phe-Pro-|-Gly-Pro-|-Ile.. In terms of biological role, removes N-terminal dipeptides sequentially from polypeptides having unsubstituted N-termini provided that the penultimate residue is proline. The protein is Xaa-Pro dipeptidyl-peptidase of Streptococcus pneumoniae (strain P1031).